A 51-amino-acid polypeptide reads, in one-letter code: Insulin (51 aa).

Intrachain disulfides connect Cys7–Cys37, Cys19–Cys50, and Cys36–Cys41.

The protein belongs to the insulin family. As to quaternary structure, heterodimer of a B chain and an A chain linked by two disulfide bonds.

It is found in the secreted. Insulin decreases blood glucose concentration. It increases cell permeability to monosaccharides, amino acids and fatty acids. It accelerates glycolysis, the pentose phosphate cycle, and glycogen synthesis in liver. The sequence is that of Insulin (INS) from Capra hircus (Goat).